The chain runs to 347 residues: Protein pelota homolog (347 aa).

Belongs to the eukaryotic release factor 1 family. Pelota subfamily. In terms of assembly, monomer. It depends on a divalent metal cation as a cofactor.

Its subcellular location is the cytoplasm. May function in recognizing stalled ribosomes, interact with stem-loop structures in stalled mRNA molecules, and effect endonucleolytic cleavage of the mRNA. May play a role in the release non-functional ribosomes and degradation of damaged mRNAs. Has endoribonuclease activity. The polypeptide is Protein pelota homolog (Methanococcoides burtonii (strain DSM 6242 / NBRC 107633 / OCM 468 / ACE-M)).